A 26-amino-acid polypeptide reads, in one-letter code: Delta-hemolysin (26 aa).

Residue M1 is modified to N-formylmethionine.

Belongs to the delta-lysin family.

It localises to the secreted. The protein resides in the host cell membrane. Functionally, lyses erythrocytes and many other mammalian cells. The chain is Delta-hemolysin (hld) from Staphylococcus aureus (strain Mu50 / ATCC 700699).